Consider the following 876-residue polypeptide: Alanine--tRNA ligase (876 aa).

Residues H562, H566, C666, and H670 each coordinate Zn(2+).

Belongs to the class-II aminoacyl-tRNA synthetase family. Zn(2+) serves as cofactor.

Its subcellular location is the cytoplasm. The enzyme catalyses tRNA(Ala) + L-alanine + ATP = L-alanyl-tRNA(Ala) + AMP + diphosphate. Its function is as follows. Catalyzes the attachment of alanine to tRNA(Ala) in a two-step reaction: alanine is first activated by ATP to form Ala-AMP and then transferred to the acceptor end of tRNA(Ala). Also edits incorrectly charged Ser-tRNA(Ala) and Gly-tRNA(Ala) via its editing domain. The chain is Alanine--tRNA ligase from Marinobacter nauticus (strain ATCC 700491 / DSM 11845 / VT8) (Marinobacter aquaeolei).